A 390-amino-acid polypeptide reads, in one-letter code: Pepsin B (390 aa).

The first 16 residues, 1 to 16 (MKIQVLVLVCLHLSEG), serve as a signal peptide directing secretion. The propeptide at 17-59 (VERIILKKGKSIRQVMEERGVLETFLRNHPKVDPAAKYLFNND) is activation peptide. Residues 74 to 387 (YFGEISIGTP…DMAANRVGFA (314 aa)) enclose the Peptidase A1 domain. Residue aspartate 92 is part of the active site. Cystine bridges form between cysteine 105-cysteine 110 and cysteine 269-cysteine 273. Aspartate 278 is an active-site residue. A disulfide bond links cysteine 312 and cysteine 345.

This sequence belongs to the peptidase A1 family.

Its subcellular location is the secreted. The enzyme catalyses Degradation of gelatin, little activity on hemoglobin. Specificity on B chain of insulin more restricted than that of pepsin A. Does not cleave 1-Phe-|-Val-2, 4-Gln-|-His-5 or 23-Gly-|-Phe-24.. Hydrolyzes various peptides including beta-endorphin, insulin B chain, dynorphin A, and neurokinin A, with high specificity for the cleavage of the Phe-Xaa bonds. This chain is Pepsin B (PGB), found in Canis lupus familiaris (Dog).